A 128-amino-acid chain; its full sequence is Small ribosomal subunit protein uS12 (128 aa).

The segment at 1 to 30 (MPTINQLIRKGREPKERKSKSPALMGNPQK) is disordered. The residue at position 89 (Asp89) is a 3-methylthioaspartic acid. The disordered stretch occupies residues 106-128 (GVEGRKQGRSKYGTKRPKEGGKK).

The protein belongs to the universal ribosomal protein uS12 family. As to quaternary structure, part of the 30S ribosomal subunit. Contacts proteins S8 and S17. May interact with IF1 in the 30S initiation complex.

Its function is as follows. With S4 and S5 plays an important role in translational accuracy. In terms of biological role, interacts with and stabilizes bases of the 16S rRNA that are involved in tRNA selection in the A site and with the mRNA backbone. Located at the interface of the 30S and 50S subunits, it traverses the body of the 30S subunit contacting proteins on the other side and probably holding the rRNA structure together. The combined cluster of proteins S8, S12 and S17 appears to hold together the shoulder and platform of the 30S subunit. This chain is Small ribosomal subunit protein uS12, found in Dictyoglomus thermophilum (strain ATCC 35947 / DSM 3960 / H-6-12).